Reading from the N-terminus, the 131-residue chain is C-type natriuretic peptide 1 (131 aa).

The signal sequence occupies residues 1-22 (MLYPALLCAALLLIAPLGHTEG). Residues 23 to 109 (RTLHPSPDAI…KRAVMDRSRR (87 aa)) constitute a propeptide that is removed on maturation. Cys115 and Cys131 are disulfide-bonded.

This sequence belongs to the natriuretic peptide family. Expressed in brain and to a low extent in atrium.

The protein resides in the secreted. Functionally, exhibits natriuretic and vasodepressant activity. Has a cGMP-stimulating activity. This is C-type natriuretic peptide 1 from Oncorhynchus mykiss (Rainbow trout).